The sequence spans 176 residues: Small ribosomal subunit protein uS5 (176 aa).

The S5 DRBM domain maps to 18–81 (FEEKMLFVNR…SIARKNMISV (64 aa)).

This sequence belongs to the universal ribosomal protein uS5 family. In terms of assembly, part of the 30S ribosomal subunit. Contacts proteins S4 and S8.

Its function is as follows. With S4 and S12 plays an important role in translational accuracy. Functionally, located at the back of the 30S subunit body where it stabilizes the conformation of the head with respect to the body. The sequence is that of Small ribosomal subunit protein uS5 from Deinococcus deserti (strain DSM 17065 / CIP 109153 / LMG 22923 / VCD115).